The chain runs to 166 residues: 2-C-methyl-D-erythritol 2,4-cyclodiphosphate synthase (166 aa).

A divalent metal cation contacts are provided by Asp17 and His19. 4-CDP-2-C-methyl-D-erythritol 2-phosphate contacts are provided by residues 17–19 (DSH) and 43–44 (HS). His51 is a binding site for a divalent metal cation. Residues 65-67 (DIG), 109-115 (AQKPKMA), and Arg151 each bind 4-CDP-2-C-methyl-D-erythritol 2-phosphate.

Belongs to the IspF family. As to quaternary structure, homotrimer. The cofactor is a divalent metal cation.

It carries out the reaction 4-CDP-2-C-methyl-D-erythritol 2-phosphate = 2-C-methyl-D-erythritol 2,4-cyclic diphosphate + CMP. It functions in the pathway isoprenoid biosynthesis; isopentenyl diphosphate biosynthesis via DXP pathway; isopentenyl diphosphate from 1-deoxy-D-xylulose 5-phosphate: step 4/6. Functionally, involved in the biosynthesis of isopentenyl diphosphate (IPP) and dimethylallyl diphosphate (DMAPP), two major building blocks of isoprenoid compounds. Catalyzes the conversion of 4-diphosphocytidyl-2-C-methyl-D-erythritol 2-phosphate (CDP-ME2P) to 2-C-methyl-D-erythritol 2,4-cyclodiphosphate (ME-CPP) with a corresponding release of cytidine 5-monophosphate (CMP). The protein is 2-C-methyl-D-erythritol 2,4-cyclodiphosphate synthase of Rhodopirellula baltica (strain DSM 10527 / NCIMB 13988 / SH1).